A 71-amino-acid chain; its full sequence is Small ribosomal subunit protein bS21 (71 aa).

Residues 48 to 60 (KKAAAVKRYKKKL) are compositionally biased toward basic residues. The interval 48–71 (KKAAAVKRYKKKLQRESIRTTRMY) is disordered. Residues 61 to 71 (QRESIRTTRMY) are compositionally biased toward basic and acidic residues.

The protein belongs to the bacterial ribosomal protein bS21 family.

The chain is Small ribosomal subunit protein bS21 from Psychrobacter sp. (strain PRwf-1).